Reading from the N-terminus, the 146-residue chain is Large ribosomal subunit protein mL49 (146 aa).

A mitochondrion-targeting transit peptide spans 1 to 38 (MISSCVTRCFGRGKCLPGPATASIYQTIRCISTNSNKA).

This sequence belongs to the mitochondrion-specific ribosomal protein mL49 family. Component of the mitochondrial large ribosomal subunit (mt-LSU). Mature yeast 74S mitochondrial ribosomes consist of a small (37S) and a large (54S) subunit. The 37S small subunit contains a 15S ribosomal RNA (15S mt-rRNA) and 34 different proteins. The 54S large subunit contains a 21S rRNA (21S mt-rRNA) and 46 different proteins.

The protein resides in the mitochondrion. Its function is as follows. Component of the mitochondrial ribosome (mitoribosome), a dedicated translation machinery responsible for the synthesis of mitochondrial genome-encoded proteins, including at least some of the essential transmembrane subunits of the mitochondrial respiratory chain. The mitoribosomes are attached to the mitochondrial inner membrane and translation products are cotranslationally integrated into the membrane. This Saccharomyces cerevisiae (strain ATCC 204508 / S288c) (Baker's yeast) protein is Large ribosomal subunit protein mL49 (IMG2).